The chain runs to 295 residues: Forkhead box protein N5 (295 aa).

The disordered stretch occupies residues 119 to 146 (STVEDSEDEAPTSCSDLMTDDDNDDSYN). A DNA-binding region (fork-head) is located at residues 178 to 275 (RPPLNYCNLI…NEMHALSDDL (98 aa)).

Ubiquitously expressed in early cleavage stage and gastrula stage embryos.

The protein localises to the nucleus. The protein is Forkhead box protein N5 of Xenopus laevis (African clawed frog).